The sequence spans 295 residues: Small ribosomal subunit biogenesis GTPase RsgA (295 aa).

The 161-residue stretch at 68 to 228 (KNLLVKPHVA…VVDTPGFANL (161 aa)) folds into the CP-type G domain. GTP contacts are provided by residues 117 to 120 (NKMD) and 170 to 178 (GLSGVGKSS). Zn(2+) contacts are provided by C250, C255, H257, and C263.

It belongs to the TRAFAC class YlqF/YawG GTPase family. RsgA subfamily. Monomer. Associates with 30S ribosomal subunit, binds 16S rRNA. Requires Zn(2+) as cofactor.

It localises to the cytoplasm. One of several proteins that assist in the late maturation steps of the functional core of the 30S ribosomal subunit. Helps release RbfA from mature subunits. May play a role in the assembly of ribosomal proteins into the subunit. Circularly permuted GTPase that catalyzes slow GTP hydrolysis, GTPase activity is stimulated by the 30S ribosomal subunit. The chain is Small ribosomal subunit biogenesis GTPase RsgA from Thermotoga neapolitana (strain ATCC 49049 / DSM 4359 / NBRC 107923 / NS-E).